A 445-amino-acid chain; its full sequence is tRNA-2-methylthio-N(6)-dimethylallyladenosine synthase (445 aa).

Positions 3–120 constitute an MTTase N-terminal domain; it reads RKLFIQTHGC…LPGLITQAAS (118 aa). [4Fe-4S] cluster contacts are provided by C12, C49, C83, C157, C161, and C164. In terms of domain architecture, Radical SAM core spans 143–375; that stretch reads SVDGPSAFVS…QQRINQNVQD (233 aa). Residues 378 to 442 form the TRAM domain; it reads RKMVGSTQRI…SNSLLGTDPR (65 aa).

The protein belongs to the methylthiotransferase family. MiaB subfamily. As to quaternary structure, monomer. It depends on [4Fe-4S] cluster as a cofactor.

It localises to the cytoplasm. It catalyses the reaction N(6)-dimethylallyladenosine(37) in tRNA + (sulfur carrier)-SH + AH2 + 2 S-adenosyl-L-methionine = 2-methylsulfanyl-N(6)-dimethylallyladenosine(37) in tRNA + (sulfur carrier)-H + 5'-deoxyadenosine + L-methionine + A + S-adenosyl-L-homocysteine + 2 H(+). Its function is as follows. Catalyzes the methylthiolation of N6-(dimethylallyl)adenosine (i(6)A), leading to the formation of 2-methylthio-N6-(dimethylallyl)adenosine (ms(2)i(6)A) at position 37 in tRNAs that read codons beginning with uridine. In Alcanivorax borkumensis (strain ATCC 700651 / DSM 11573 / NCIMB 13689 / SK2), this protein is tRNA-2-methylthio-N(6)-dimethylallyladenosine synthase.